The sequence spans 534 residues: Autophagic-related protein 16.2 (534 aa).

WD repeat units lie at residues 243-281, 288-329, 330-368, 371-411, 413-452, 459-498, and 504-534; these read THDG…TDAS, GCLG…STFS, GHTD…CLKS, VGST…ATYS, ELGQ…IIHL, KTSC…LEKV, and SDSA…TLWR.

This sequence belongs to the WD repeat tipD family. In terms of assembly, homodimer (via N-terminus). Most likely a component of a complex at least containing atg-5, lgg-3, atg-16.1 and/or atg-16.2. Interacts (via N-terminus) with atg-16.1 (via N-terminus). Interacts (via N-terminus) with atg-5. Interacts (via WD 5-6 repeats) with lgg-2; the interaction is direct. In terms of tissue distribution, expressed in neurons, pharyngeal muscles, body wall muscle cells and intestinal cells.

It localises to the cytoplasm. Its subcellular location is the cell membrane. Functionally, most likely a component of the atg-5-atg-12-atg-16.1/atg-16.2 complex, which is recruited to the preautophagosomal membrane and associates with lgg-2 to promote autophagosome formation. Plays a role in the recruitment of lipidated lgg-1 probably to the autophagosome membrane to promote autophagosome formation. Furthermore, association with atg-5 is required for the nucleation of lgg-1 positive autophagosomes. Although its role in autophagosome formation may be distinct to the role of atg-16.2, it functions in a partially redundant manner with atg-16.1 to regulate autophagic processes. In a daf-18/PTEN- and daf-16/FOXO-dependent manner, required for maintaining the numbers of germ stem cell progenitors in the gonad during the late phases of larval development. The chain is Autophagic-related protein 16.2 from Caenorhabditis elegans.